The chain runs to 1257 residues: Protein flightless-1 homolog (1257 aa).

LRR repeat units lie at residues 6 to 31, 32 to 54, 56 to 77, 78 to 102, 103 to 126, 128 to 148, 149 to 172, 174 to 195, 197 to 221, 222 to 244, 246 to 267, 268 to 290, 292 to 315, 316 to 338, 339 to 361, and 363 to 384; these read LQFVKGIDFSGNDFSGDRFPHDVEQM, TQMTWLKLNDSKLEQVPDELSRC, NLEHLQMAHNQLISVHGELSDL, PRLRSVIVRDNNLKTAGIPTDIFRM, KDLTIIDLSRNQLREVPTNLEYAK, SIVLNLSYNNIETIPNSVCAN, LIDLLFLDLSNNKLDMLPPQIRRL, MLQSLKLSNNPLNHFQLKQLPS, TSLSVLHMSNTNRTLDNIPPTLDDM, HNLRDVDFSENNLPIVPEALFKL, NLRKLNLSGNKIEKLNMTEGEW, ENLETLNMSHNQLTVLPDCVVKL, RLTKLYAANNQLTFEGIPSGIGKL, IQLTVLHLSYNKLELVPEGISRC, VKLQKLKLDHNRLITLPEGIHLL, and DLKVLDLHENENLVMPPKPNDA. 4 Gelsolin-like repeats span residues 523–600, 640–714, 759–832, and 1168–1243; these read MDEA…EEFL, AVEM…PEFW, ELPK…MMFR, and EKTV…CRFR.

The protein belongs to the villin/gelsolin family.

Its function is as follows. May play a key role in embryonic cellularization by interacting with both the cytoskeleton and other cellular components. The protein is Protein flightless-1 homolog (fli-1) of Caenorhabditis elegans.